Reading from the N-terminus, the 188-residue chain is dCTP deaminase (188 aa).

DCTP-binding positions include 111 to 116, 135 to 137, Gln156, Tyr170, and Gln180; these read KSTYAR and TLE. Residue Glu137 is the Proton donor/acceptor of the active site.

Belongs to the dCTP deaminase family. In terms of assembly, homotrimer.

It carries out the reaction dCTP + H2O + H(+) = dUTP + NH4(+). Its pathway is pyrimidine metabolism; dUMP biosynthesis; dUMP from dCTP (dUTP route): step 1/2. Its function is as follows. Catalyzes the deamination of dCTP to dUTP. The sequence is that of dCTP deaminase from Chromohalobacter salexigens (strain ATCC BAA-138 / DSM 3043 / CIP 106854 / NCIMB 13768 / 1H11).